A 437-amino-acid chain; its full sequence is Putative metabolite transport protein NicT (437 aa).

12 helical membrane-spanning segments follow: residues 28 to 48 (LIPF…NVGF), 66 to 86 (LGAG…NLIL), 93 to 113 (LWIA…MFVT), 123 to 143 (FLLG…LTMW), 152 to 172 (IIAL…PISG), 189 to 209 (WLFL…FWAL), 254 to 274 (VWML…MGFW), 290 to 310 (IGLL…MIGA), 320 to 340 (WHII…TLFS), 347 to 367 (VVLF…FFSL), 374 to 394 (GTAA…AGLV), and 411 to 431 (AALW…IALP).

The protein belongs to the major facilitator superfamily.

Its subcellular location is the membrane. Probable transporter, possibly involved in the aerobic nicotinate degradation pathway. This Pseudomonas putida (strain ATCC 47054 / DSM 6125 / CFBP 8728 / NCIMB 11950 / KT2440) protein is Putative metabolite transport protein NicT (nicT).